We begin with the raw amino-acid sequence, 522 residues long: Solute carrier family 2, facilitated glucose transporter member 2 (522 aa).

The Cytoplasmic segment spans residues M1 to L10. The helical transmembrane segment at A11–I31 threads the bilayer. At N32–S96 the chain is on the extracellular side. N62 is a glycosylation site (N-linked (GlcNAc...) asparagine). Residues L97–G117 form a helical membrane-spanning segment. Residues D118–A125 are Cytoplasmic-facing. Residues M126 to G146 form a helical membrane-spanning segment. Topologically, residues P147–R156 are extracellular. The chain crosses the membrane as a helical span at residues S157–I177. Residues A178–A185 are Cytoplasmic-facing. Residues L186–L206 traverse the membrane as a helical segment. Q191 provides a ligand contact to D-glucose. Residues S207 to Y215 lie on the Extracellular side of the membrane. The chain crosses the membrane as a helical span at residues W216 to F236. Over C237 to P301 the chain is Cytoplasmic. The chain crosses the membrane as a helical span at residues I302–Y322. Residues Q312–Q313 and N318 contribute to the D-glucose site. Residues Y323–V337 lie on the Extracellular side of the membrane. A helical membrane pass occupies residues Y338–V358. N347 contacts D-glucose. The Cytoplasmic portion of the chain corresponds to E359–T365. A helical transmembrane segment spans residues L366–V386. Residues L387–A401 lie on the Extracellular side of the membrane. Residues I402–A422 traverse the membrane as a helical segment. Residues E410 and W418 each coordinate D-glucose. The Cytoplasmic segment spans residues E423–P431. The chain crosses the membrane as a helical span at residues T432–F452. The Extracellular portion of the chain corresponds to Q453 to L459. The chain crosses the membrane as a helical span at residues G460–F480. The Cytoplasmic segment spans residues K481–V522. T521 is modified (phosphothreonine).

The protein belongs to the major facilitator superfamily. Sugar transporter (TC 2.A.1.1) family. Glucose transporter subfamily. N-glycosylated; required for stability and retention at the cell surface of pancreatic beta cells. Present in liver, intestine, kidney and beta-pancreatic islet cells.

It is found in the cell membrane. The enzyme catalyses D-glucose(out) = D-glucose(in). It carries out the reaction D-fructose(out) = D-fructose(in). It catalyses the reaction L-dehydroascorbate(out) = L-dehydroascorbate(in). The catalysed reaction is D-galactose(in) = D-galactose(out). With respect to regulation, D-glucose and maltose competitively inhibit fructose transport. D-glucose, D-fructose and maltose inhibit deoxyglucose transport. In terms of biological role, facilitative hexose transporter that mediates the transport of glucose, fructose and galactose. Likely mediates the bidirectional transfer of glucose across the plasma membrane of hepatocytes and is responsible for uptake of glucose by the beta cells; may comprise part of the glucose-sensing mechanism of the beta cell. May also participate with the Na(+)/glucose cotransporter in the transcellular transport of glucose in the small intestine and kidney. Also able to mediate the transport of dehydroascorbate. The polypeptide is Solute carrier family 2, facilitated glucose transporter member 2 (Rattus norvegicus (Rat)).